The sequence spans 403 residues: Imidazolonepropionase (403 aa).

Positions 68 and 70 each coordinate Fe(3+). The Zn(2+) site is built by H68 and H70. 4-imidazolone-5-propanoate-binding residues include R77, Y140, and H173. Y140 is a binding site for N-formimidoyl-L-glutamate. A Fe(3+)-binding site is contributed by H238. H238 contacts Zn(2+). Q241 provides a ligand contact to 4-imidazolone-5-propanoate. A Fe(3+)-binding site is contributed by D313. D313 contacts Zn(2+). N-formimidoyl-L-glutamate-binding residues include N315 and G317. S318 is a binding site for 4-imidazolone-5-propanoate.

Belongs to the metallo-dependent hydrolases superfamily. HutI family. Requires Zn(2+) as cofactor. The cofactor is Fe(3+).

It is found in the cytoplasm. The catalysed reaction is 4-imidazolone-5-propanoate + H2O = N-formimidoyl-L-glutamate. It functions in the pathway amino-acid degradation; L-histidine degradation into L-glutamate; N-formimidoyl-L-glutamate from L-histidine: step 3/3. Its function is as follows. Catalyzes the hydrolytic cleavage of the carbon-nitrogen bond in imidazolone-5-propanoate to yield N-formimidoyl-L-glutamate. It is the third step in the universal histidine degradation pathway. The polypeptide is Imidazolonepropionase (Hahella chejuensis (strain KCTC 2396)).